Here is a 978-residue protein sequence, read N- to C-terminus: MLLAMEGKLFLCQYLIWVMLLLGQLHGCTSCIEKEREALLELKKYLMSRSRESGLDYVLPTWTNDTKSDCCQWDGIKCNRTSGRVIELSVGDMYFKESSPLNLSLLHPFEEVRSLNLSTEGYNEFNGFFDDVEGYRSLSGLRNLKIMDLSTNYFNYSTFPFLNAATSLTTLILTYNEMDGPFPIKGLKDLTNLELLDLRANKLNGSMQELIHLKKLKALDLSSNKFSSSMELQELQNLINLEVLGLAQNHVDGPIPIEVFCKLKNLRDLDLKGNHFVGQIPLCLGSLKKLRVLDLSSNQLSGDLPSSFSSLESLEYLSLSDNNFDGSFSLNPLTNLTNLKLFKLSSRSHTIQVKMESTWQPNFQLSVVVLRFCSLEKIPSFLLYQKKLRLVDLSSNNLSGNIPTWLLTNNPELEVLQLQNNSFTIFPIPTMVHNLQIFDFSANNIGKFPDKMDHALPNLVRLNGSNNGFQGYFPTSIGEMKNISFLDLSYNNFSGKLPRSFVTGCVSIMFLKLSHNKFSGRFLPRETNFPSLDVLRMDNNLFTGNIGGGLSNSTMLRILDMSNNGLSGAIPRWLFEFPYLDYVLISNNFLEGTIPPSLLGMPFLSFLDLSGNQFSGALPSHVDSELGIYMFLHNNNFTGPIPDTLLKSVQILDLRNNKLSGSIPQFDDTQSINILLLKGNNLTGSIPRELCDLSNVRLLDLSDNKLNGVIPSCLSNLSFGRLQEDAMALNIPPSFLQTSLEMELYKSTFLVDKIEVDRSTYQETEIKFAAKQRYDSYSGRSEFSEGILRLMYGMDLSNNELSGVIPTELGDLLKLRTLNLSHNSLLGSIPSSFSKLIDVESLDLSHNMLQGSIPQLLSSLTSLAVFDVSSNNLSGIIPQGRQFNTFEEESYLGNPLLCGPPTSRSCETNKSPEEADNGQEEEDDKAAIDMMVFYFSTASIYVTALIGVLVLMCFDCPWRRAWLRIVDAFIASAKHVLP.

A signal peptide spans 1–27 (MLLAMEGKLFLCQYLIWVMLLLGQLHG). Over 28–930 (CTSCIEKERE…EEDDKAAIDM (903 aa)) the chain is Extracellular. N64, N79, N102, N116, and N155 each carry an N-linked (GlcNAc...) asparagine glycan. LRR repeat units lie at residues 141–167 (LRNL…AATS), 169–189 (TTLI…GLKD), 190–213 (LTNL…LIHL), 214–237 (KKLK…ELQN), 238–262 (LINL…VFCK), 264–287 (KNLR…LGSL), 288–310 (KKLR…SFSS), 312–335 (ESLE…PLTN), 337–361 (TNLK…TWQP), 362–385 (NFQL…LLYQ), 386–409 (KKLR…LLTN), 410–432 (NPEL…PTMV), 433–455 (HNLQ…MDHA), 457–480 (PNLV…IGEM), 481–504 (KNIS…FVTG), 506–529 (VSIM…ETNF), 530–553 (PSLD…LSNS), 554–577 (TMLR…LFEF), 579–601 (YLDY…LLGM), 602–625 (PFLS…VDSE), 627–646 (GIYM…DTLL), 647–671 (KSVQ…DTQS), 673–693 (NILL…LCDL), 694–716 (SNVR…CLSN), 788–811 (LRLM…ELGD), 812–835 (LLKL…SFSK), 837–859 (IDVE…LLSS), and 860–885 (LTSL…QFNT). An N-linked (GlcNAc...) asparagine glycan is attached at N204. N-linked (GlcNAc...) asparagine glycosylation is present at N335. N397 and N420 each carry an N-linked (GlcNAc...) asparagine glycan. Residues N463, N482, and N492 are each glycosylated (N-linked (GlcNAc...) asparagine). N552 carries N-linked (GlcNAc...) asparagine glycosylation. An N-linked (GlcNAc...) asparagine glycan is attached at N636. Residues N681 and N716 are each glycosylated (N-linked (GlcNAc...) asparagine). N-linked (GlcNAc...) asparagine glycosylation is present at N819. An N-linked (GlcNAc...) asparagine glycan is attached at N872. Positions 902–922 (TSRSCETNKSPEEADNGQEEE) are disordered. A helical transmembrane segment spans residues 931–951 (MVFYFSTASIYVTALIGVLVL). Residues 952 to 978 (MCFDCPWRRAWLRIVDAFIASAKHVLP) lie on the Cytoplasmic side of the membrane.

The protein belongs to the RLP family.

It localises to the cell membrane. This Arabidopsis thaliana (Mouse-ear cress) protein is Receptor like protein 21.